The primary structure comprises 184 residues: ADP-ribosylation factor-like protein 2 (184 aa).

Glycine 2 carries the N-myristoyl glycine lipid modification. Residues 23-30 (GLDNAGKT), 66-70 (DVGGQ), glycine 68, and 125-128 (NKSD) each bind GTP.

Belongs to the small GTPase superfamily. Arf family.

It is found in the cytoplasm. It localises to the cell membrane. The protein resides in the cytoskeleton. The protein localises to the microtubule organizing center. Its subcellular location is the centrosome. GTP-binding protein that functions in embryogenesis, cytokinesis, germline development and microtubulule cytoskeleton dynamics. This Caenorhabditis briggsae protein is ADP-ribosylation factor-like protein 2 (evl-20.1).